The following is a 368-amino-acid chain: MIALIIGMLVSLIVTLVGTPLLIRLVHKLHYGQYIRQDGPQSHLVKRGTPTLGGVVINFAILLGWASSALYRYLRSGDVPSWSAALVLFAMLSMGLLGFIDDFAKVRKKQNEGLSVGGKFIGQFIFATIYAVLALLIPTKSGFPSAQAGISFIEQPFFNFDFAGRAVAIILFVIWVNFLMTAWTNAVNLTDGLDGLAAGSSMIAFTGFGIIAFWESYHIKGGSHGGYSYAVSDPLDLTVIAVCAAVACFGFLWYNSNPASIFMGDTGSLALGGLFAALSIATHTEFLAVVLGGLYVMEAMSDVIQVGYFKMTHKRVFKMAPIHHHFELEGWTETKVVVRFWMIELIFVLLALTIFYGDWVTRSGLLFS.

9 helical membrane-spanning segments follow: residues 2–22 (IALIIGMLVSLIVTLVGTPLL), 51–71 (TLGGVVINFAILLGWASSALY), 80–100 (PSWSAALVLFAMLSMGLLGFI), 117–137 (GGKFIGQFIFATIYAVLALLI), 167–187 (VAIILFVIWVNFLMTAWTNAV), 193–213 (LDGLAAGSSMIAFTGFGIIAF), 234–254 (PLDLTVIAVCAAVACFGFLWY), 271–291 (LGGLFAALSIATHTEFLAVVL), and 340–360 (FWMIELIFVLLALTIFYGDWV).

This sequence belongs to the glycosyltransferase 4 family. MraY subfamily. The cofactor is Mg(2+).

Its subcellular location is the cell membrane. It carries out the reaction UDP-N-acetyl-alpha-D-muramoyl-L-alanyl-gamma-D-glutamyl-meso-2,6-diaminopimeloyl-D-alanyl-D-alanine + di-trans,octa-cis-undecaprenyl phosphate = di-trans,octa-cis-undecaprenyl diphospho-N-acetyl-alpha-D-muramoyl-L-alanyl-D-glutamyl-meso-2,6-diaminopimeloyl-D-alanyl-D-alanine + UMP. Its pathway is cell wall biogenesis; peptidoglycan biosynthesis. Catalyzes the initial step of the lipid cycle reactions in the biosynthesis of the cell wall peptidoglycan: transfers peptidoglycan precursor phospho-MurNAc-pentapeptide from UDP-MurNAc-pentapeptide onto the lipid carrier undecaprenyl phosphate, yielding undecaprenyl-pyrophosphoryl-MurNAc-pentapeptide, known as lipid I. This chain is Phospho-N-acetylmuramoyl-pentapeptide-transferase, found in Bifidobacterium longum (strain DJO10A).